The chain runs to 24 residues: Fraternine (24 aa).

C11 and C24 are disulfide-bonded. A Cysteine amide modification is found at C24.

In terms of tissue distribution, expressed by the venom gland.

The protein resides in the secreted. In terms of biological role, wasp venom peptide that acts as a potent mast cell degranulating peptide without hemolytic activity. Shows neuroprotective effect, since it prevents the death of dopaminergic neurons of the brain substantia nigra region and recovers motor deficit in a 6-hydroxydopamine (6-OHDA)-induced murine model of Parkinson disease. This Parachartergus fraternus (Artistic wasp) protein is Fraternine.